A 181-amino-acid polypeptide reads, in one-letter code: Small ribosomal subunit protein cS23 (181 aa).

Positions 1-40 (MLPMSVHPATTPALASRPRVSLPRPSTPSSSSSLVHLKSR) are disordered. A compositionally biased stretch (low complexity) spans 14–36 (LASRPRVSLPRPSTPSSSSSLVH).

The protein belongs to the chloroplast-specific ribosomal protein cS23 family. Part of the 30S ribosomal subunit.

The protein resides in the plastid. It is found in the chloroplast. Component of the chloroplast ribosome (chloro-ribosome), a dedicated translation machinery responsible for the synthesis of chloroplast genome-encoded proteins, including proteins of the transcription and translation machinery and components of the photosynthetic apparatus. The protein is Small ribosomal subunit protein cS23 (PSRP3) of Hordeum vulgare (Barley).